The following is a 962-amino-acid chain: Splicing regulator ARVCF (962 aa).

A coiled-coil region spans residues 8-46; it reads SAASILASVKEQEARFERLTRALEQERRHVALQLERAQQ. Residues 95–122 are disordered; that stretch reads TVEEDPGTPTSHVSIVTSEDGTTRRTET. Phosphothreonine is present on residues Thr102 and Thr104. The segment covering 102–114 has biased composition (polar residues); that stretch reads TPTSHVSIVTSED. Omega-N-methylarginine is present on Arg170. Disordered regions lie at residues 186-253 and 266-290; these read GGGF…LPER and RSLA…RRRP. Low complexity predominate over residues 206–217; that stretch reads RGLGMRPPRAGP. Residue Ser267 is modified to Phosphoserine. The segment covering 270 to 280 has biased composition (acidic residues); it reads ADDEGGPELEP. A phosphoserine mark is found at Ser332, Ser335, Ser343, and Ser345. ARM repeat units lie at residues 348 to 387, 390 to 429, 433 to 467, 468 to 508, 526 to 565, and 575 to 622; these read SARK…HLCF, EGVK…NLSY, TDNK…VTGT, LWNL…NEDS, LRNV…DTDN, and MRNL…GKKA. The segment at 590-614 is disordered; that stretch reads DRYQEAEPGPLGSAVGSQRRRRDDA. Ser606 bears the Phosphoserine mark. A Nuclear localization signal motif is present at residues 607–623; the sequence is QRRRRDDASCFGGKKAK. Thr642 carries the post-translational modification Phosphothreonine. ARM repeat units follow at residues 646–686, 699–738, 739–781, and 782–826; these read PKRT…AAGA, TYIR…NLSL, DRRN…AVLN, and TIHE…SHVL. The segment at 776-962 is required for interaction with RNA-binding proteins DDX5, HNRNPH2 and SRSF1 and with mRNAs; that stretch reads VVAVLNTIHE…AKPQPVDSWV (187 aa). The interval 854 to 962 is disordered; that stretch reads ATAKGPKGAL…AKPQPVDSWV (109 aa). Phosphoserine occurs at positions 864 and 871. At Thr872 the chain carries Phosphothreonine. Over residues 878–887 the composition is skewed to basic and acidic residues; it reads KSLEGEKTGS. Ser915 is subject to Phosphoserine. A compositionally biased stretch (basic and acidic residues) spans 920-932; that stretch reads ASEKEPLKLDPSR.

It belongs to the beta-catenin family. In terms of assembly, component of a ribonucleoprotein complex containing mRNAs and RNA-binding proteins including DDX5, HNRNPH2 and SRSF1 as well as ARVCF. Interacts (via the extreme C-terminus) with FRMPD2 (via the PDZ 2 domain). Interacts with CCDC85B. In terms of tissue distribution, found in all the examined tissues including heart, brain, liver and kidney. Found at low level in lung. Expressed in dermal connective tissue, salivary gland duct and in the corneal layer (at protein level). Expressed in arrector pili muscle (at protein level). High levels detected in epithelial cells with lower levels found in fibroblasts and T lymphocytes.

Its subcellular location is the cell junction. The protein resides in the adherens junction. It is found in the nucleus. It localises to the cytoplasm. Functionally, contributes to the regulation of alternative splicing of pre-mRNAs. The polypeptide is Splicing regulator ARVCF (Homo sapiens (Human)).